Reading from the N-terminus, the 73-residue chain is Conotoxin CnIIIG (73 aa).

Residues 1–19 (MSKLGVLLTICLLLLPLTA) form the signal peptide. A propeptide spanning residues 20 to 48 (LPMDEDQPADQPADRMQDDISSEQYPLFD) is cleaved from the precursor. A Pyrrolidone carboxylic acid modification is found at Gln-51. 3 disulfides stabilise this stretch: Cys-53/Cys-72, Cys-54/Cys-70, and Cys-60/Cys-73.

It belongs to the conotoxin M superfamily. Expressed by the venom duct.

Its subcellular location is the secreted. Its function is as follows. Shows a paralytic effect in fish. The protein is Conotoxin CnIIIG of Conus consors (Singed cone).